The following is a 459-amino-acid chain: Argininosuccinate lyase (459 aa).

This sequence belongs to the lyase 1 family. Argininosuccinate lyase subfamily.

Its subcellular location is the cytoplasm. It catalyses the reaction 2-(N(omega)-L-arginino)succinate = fumarate + L-arginine. It participates in amino-acid biosynthesis; L-arginine biosynthesis; L-arginine from L-ornithine and carbamoyl phosphate: step 3/3. In Prochlorococcus marinus (strain MIT 9515), this protein is Argininosuccinate lyase.